Consider the following 648-residue polypeptide: Macrolide export ATP-binding/permease protein MacB (648 aa).

The Cytoplasmic portion of the chain corresponds to 1-272; it reads MTPLLELKDI…RALAANKMRT (272 aa). One can recognise an ABC transporter domain in the interval 5-243; that stretch reads LELKDIRRSY…TGGTEPVVNT (239 aa). 41–48 serves as a coordination point for ATP; that stretch reads GASGSGKS. A helical transmembrane segment spans residues 273 to 293; the sequence is LLTMLGIIIGIASVVSIVVVG. The Periplasmic portion of the chain corresponds to 294 to 522; sequence DAAKQMVLAD…TVEKTTRTLQ (229 aa). Residues 523 to 543 traverse the membrane as a helical segment; the sequence is LFLTLVAVISLVVGGIGVMNI. The Cytoplasmic portion of the chain corresponds to 544 to 575; sequence MLVSVTERTREIGIRMAVGARASDVLQQFLIE. A helical membrane pass occupies residues 576–596; that stretch reads AVLVCLVGGALGITLSLLIAF. Topologically, residues 597–610 are periplasmic; sequence TLQLFLPGWEIGFS. A helical membrane pass occupies residues 611 to 631; the sequence is PLALLLAFLCSTVTGILFGWL. Residues 632-648 lie on the Cytoplasmic side of the membrane; sequence PARNAARLDPVDALARE.

This sequence belongs to the ABC transporter superfamily. Macrolide exporter (TC 3.A.1.122) family. In terms of assembly, homodimer. Part of the tripartite efflux system MacAB-TolC, which is composed of an inner membrane transporter, MacB, a periplasmic membrane fusion protein, MacA, and an outer membrane component, TolC. The complex forms a large protein conduit and can translocate molecules across both the inner and outer membranes. Interacts with MacA.

Its subcellular location is the cell inner membrane. ATPase activity is stimulated by interaction with MacA and inhibited by vanadate. Part of the tripartite efflux system MacAB-TolC. MacB is a non-canonical ABC transporter that contains transmembrane domains (TMD), which form a pore in the inner membrane, and an ATP-binding domain (NBD), which is responsible for energy generation. When overexpressed, the system confers resistance against macrolides composed of 14- and 15-membered lactones but no or weak resistance against 16-membered ones. In addition, the system could also transport R-LPS or a similar glycolipid. This Escherichia coli (strain K12) protein is Macrolide export ATP-binding/permease protein MacB.